Consider the following 321-residue polypeptide: D-alanine--D-alanine ligase (321 aa).

Positions 121–315 constitute an ATP-grasp domain; the sequence is RIWFLTNNIN…FTNLIEEIIK (195 aa). 147–199 contacts ATP; the sequence is PMKRPYVIKPLTQGSSIGVEVIFAEDDFNFADYDFPYGDQVIIEQYIKGRELQ. The Mg(2+) site is built by Glu-268, Glu-282, and Asn-284.

This sequence belongs to the D-alanine--D-alanine ligase family. Mg(2+) is required as a cofactor. It depends on Mn(2+) as a cofactor.

The protein localises to the cytoplasm. It carries out the reaction 2 D-alanine + ATP = D-alanyl-D-alanine + ADP + phosphate + H(+). It functions in the pathway cell wall biogenesis; peptidoglycan biosynthesis. Its function is as follows. Cell wall formation. In Rickettsia rickettsii (strain Iowa), this protein is D-alanine--D-alanine ligase.